Reading from the N-terminus, the 295-residue chain is MLKALEKAGILVEALPYIKKFSGKTVVIKYGGAAMVNDQLKEAVIMDVILMKLVGIHPVVVHGGGPEINGMLDRLGLKSHFIQGLRVTDESTMEVVEMVLAGKVNKEIVALIQRFGGKAVGLCGKDGGLIQAKKRFELVKNEGGARVPTDIGFVGDVVKIEPGLVRELADRGYIPVIAPIGVGEKGESYNINADTAAGELAQALKADKLVLLTDVEGILRDRKDPSSLISSLRIDDVPALVEEGVISGGMIPKVACCVEALQGGVGQTHIIDGRLPHSLLLEVFTDKGIGTMVLK.

Substrate is bound by residues 64 to 65 (GG), Arg-86, and Asn-190.

The protein belongs to the acetylglutamate kinase family. ArgB subfamily.

Its subcellular location is the cytoplasm. The catalysed reaction is N-acetyl-L-glutamate + ATP = N-acetyl-L-glutamyl 5-phosphate + ADP. Its pathway is amino-acid biosynthesis; L-arginine biosynthesis; N(2)-acetyl-L-ornithine from L-glutamate: step 2/4. In terms of biological role, catalyzes the ATP-dependent phosphorylation of N-acetyl-L-glutamate. In Heliobacterium modesticaldum (strain ATCC 51547 / Ice1), this protein is Acetylglutamate kinase.